The primary structure comprises 365 residues: 2-aminoethylphosphonate--pyruvate transaminase (365 aa).

At lysine 194 the chain carries N6-(pyridoxal phosphate)lysine.

The protein belongs to the class-V pyridoxal-phosphate-dependent aminotransferase family. PhnW subfamily. Homodimer. Pyridoxal 5'-phosphate serves as cofactor.

The catalysed reaction is (2-aminoethyl)phosphonate + pyruvate = phosphonoacetaldehyde + L-alanine. In terms of biological role, involved in phosphonate degradation. The sequence is that of 2-aminoethylphosphonate--pyruvate transaminase from Bacillus cereus (strain AH187).